The following is a 437-amino-acid chain: (S)-6-hydroxynicotine oxidase (437 aa).

FAD-binding positions include S16, E35–R37, R43, G57–G60, V231, S405, and E413–I415.

The protein belongs to the flavin monoamine oxidase family. In terms of assembly, homodimer. FAD is required as a cofactor.

It catalyses the reaction (S)-6-hydroxynicotine + O2 + H2O = 6-hydroxypseudooxynicotine + H2O2. It carries out the reaction (S)-6-hydroxynicotine + O2 = 6-hydroxy-N-methylmyosmine + H2O2. It participates in alkaloid degradation; nicotine degradation; 6-hydroxypseudooxynicotine from nicotine (S-isomer route): step 2/2. Its activity is regulated as follows. Partially inhibited by Co(2+) or Zn(2+) and significantly inhibited by Ag(+), Cu(2+) and Hg(2+). Involved in the degradation of L-nicotine. Catalyzes the oxidation of (S)-6-hydroxynicotine (6-hydroxy-L-nicotine) to 6-hydroxypseudooxynicotine. Oxidation of the pyrrolidine ring of (S)-6-hydroxynicotine leads to the formation of the optically inactive 6-hydroxy-N-methylmyosmine, which hydrolyzes spontaneously to 6-hydroxypseudooxynicotine. Acts with absolute stereospecificity on the L-form of 6-hydroxynicotine. Also involved in the degradation of nornicotine, and catalyzes the oxidation of 6-hydroxynornicotine to 6-hydroxymyosmine, which hydrolyzes to 6-hydroxypseudooxynornicotine. In vitro, converts (S)-nicotine into N-methylmyosmine, which spontaneously hydrolyzes spontaneously into pseudooxynicotine, but catalytic efficiency is about 1900-fold higher with (S)-6-hydroxynicotine. The protein is (S)-6-hydroxynicotine oxidase of Shinella sp. (strain HZN7).